A 394-amino-acid polypeptide reads, in one-letter code: Queuine tRNA-ribosyltransferase accessory subunit 2 (394 aa).

Cysteine 336, cysteine 338, cysteine 341, and histidine 367 together coordinate Zn(2+).

This sequence belongs to the queuine tRNA-ribosyltransferase family. QTRT2 subfamily. Heterodimer of a catalytic subunit and an accessory subunit. Zn(2+) serves as cofactor.

It is found in the cytoplasm. In terms of biological role, non-catalytic subunit of the queuine tRNA-ribosyltransferase (TGT) that catalyzes the base-exchange of a guanine (G) residue with queuine (Q) at position 34 (anticodon wobble position) in tRNAs with GU(N) anticodons (tRNA-Asp, -Asn, -His and -Tyr), resulting in the hypermodified nucleoside queuosine (7-(((4,5-cis-dihydroxy-2-cyclopenten-1-yl)amino)methyl)-7-deazaguanosine). This chain is Queuine tRNA-ribosyltransferase accessory subunit 2, found in Ixodes scapularis (Black-legged tick).